The chain runs to 122 residues: SLFELGKMILQETGKNPAKSYGVYGCNCGVGGRGKPKDATDRCCYVHKCCYKKLTGCDPKKDRYSYSWKDKTIVCGENNSCLKELCECDKAVAICLRENLDTYNKKYRYNYLKPFCKKADPC.

Cystine bridges form between cysteine 26-cysteine 116, cysteine 28-cysteine 44, cysteine 43-cysteine 95, cysteine 49-cysteine 122, cysteine 50-cysteine 88, cysteine 57-cysteine 81, and cysteine 75-cysteine 86. Positions 105-118 (KKYRYNYLKPFCKK) are important for membrane-damaging activities in eukaryotes and bacteria; heparin-binding.

It belongs to the phospholipase A2 family. Group II subfamily. K49 sub-subfamily. As to quaternary structure, homodimer; non-covalently linked (probable alternative/compact dimer conformation). As to expression, expressed by the venom gland.

The protein resides in the secreted. With respect to regulation, myotoxic activity is inhibited by suramin and rosmarinic acid. Cytotoxic and myotoxic activities are inhibited by pre-incubation with varespladib. Suramin inhibits this myotoxin by (i) direct blockage of the MDoS and MDiS, preventing the toxin/membrane interaction and disruption and (ii) formation of an oligomeric complex, resulting in a tetrameric configuration for which both MDoS and MDiS becomes physically inaccessible, thus avoiding any possibility of toxin-membrane interaction or disruption. Heparin completely inhibits the cytotoxic and bactericidal activities, but only partially the myotoxic, edema-inducing and lethal effects. In terms of biological role, snake venom phospholipase A2 (PLA2) homolog that lacks enzymatic activity. Shows high myotoxin activities. Also shows neurotoxicity, since it induces muscle paralysis when tested on mouse phrenic-diaphragm preparations. Displays edema-inducing activities. Also displays antimicrobial activity against E.coli and C.albicans, as well as antitumoral activity against some human and mice cell lines. In addition, it is effective as parasiticidal agent against Leishmania sp. and S.mansoni. It also disrupts negatively charged liposomes in a dose- and temperature-dependent manner and shows toxicity by intraperitoneal route. In contrast to other phospholipase A2-like toxins, this myotoxin does not require fatty acid binding to be active. The polypeptide is Basic phospholipase A2 homolog myotoxin II (Bothrops moojeni (Lance-headed viper)).